The chain runs to 245 residues: 1-(5-phosphoribosyl)-5-[(5-phosphoribosylamino)methylideneamino] imidazole-4-carboxamide isomerase (245 aa).

Asp-7 serves as the catalytic Proton acceptor. The Proton donor role is filled by Asp-129.

This sequence belongs to the HisA/HisF family.

The protein localises to the cytoplasm. It carries out the reaction 1-(5-phospho-beta-D-ribosyl)-5-[(5-phospho-beta-D-ribosylamino)methylideneamino]imidazole-4-carboxamide = 5-[(5-phospho-1-deoxy-D-ribulos-1-ylimino)methylamino]-1-(5-phospho-beta-D-ribosyl)imidazole-4-carboxamide. It functions in the pathway amino-acid biosynthesis; L-histidine biosynthesis; L-histidine from 5-phospho-alpha-D-ribose 1-diphosphate: step 4/9. The chain is 1-(5-phosphoribosyl)-5-[(5-phosphoribosylamino)methylideneamino] imidazole-4-carboxamide isomerase from Aliivibrio fischeri (strain ATCC 700601 / ES114) (Vibrio fischeri).